The chain runs to 153 residues: ATP synthase subunit b' (153 aa).

Residues 23-40 (LMAIQVVALTYILNSLFF) traverse the membrane as a helical segment.

This sequence belongs to the ATPase B chain family. In terms of assembly, F-type ATPases have 2 components, F(1) - the catalytic core - and F(0) - the membrane proton channel. F(1) has five subunits: alpha(3), beta(3), gamma(1), delta(1), epsilon(1). F(0) has four main subunits: a(1), b(1), b'(1) and c(10-14). The alpha and beta chains form an alternating ring which encloses part of the gamma chain. F(1) is attached to F(0) by a central stalk formed by the gamma and epsilon chains, while a peripheral stalk is formed by the delta, b and b' chains.

Its subcellular location is the cellular thylakoid membrane. Functionally, f(1)F(0) ATP synthase produces ATP from ADP in the presence of a proton or sodium gradient. F-type ATPases consist of two structural domains, F(1) containing the extramembraneous catalytic core and F(0) containing the membrane proton channel, linked together by a central stalk and a peripheral stalk. During catalysis, ATP synthesis in the catalytic domain of F(1) is coupled via a rotary mechanism of the central stalk subunits to proton translocation. Component of the F(0) channel, it forms part of the peripheral stalk, linking F(1) to F(0). The b'-subunit is a diverged and duplicated form of b found in plants and photosynthetic bacteria. In Prochlorococcus marinus (strain MIT 9515), this protein is ATP synthase subunit b'.